A 545-amino-acid polypeptide reads, in one-letter code: Membrane protein insertase YidC (545 aa).

6 helical membrane passes run 10–30, 319–339, 341–361, 407–427, 467–487, and 502–522; these read AVYL…FLFS, LLYF…NVIP, WGLS…PLTF, IGGC…YGLV, ILPF…SNVS, and MPIM…IYWI.

It belongs to the OXA1/ALB3/YidC family. Type 1 subfamily. In terms of assembly, interacts with the Sec translocase complex via SecD. Specifically interacts with transmembrane segments of nascent integral membrane proteins during membrane integration.

It localises to the cell inner membrane. Required for the insertion and/or proper folding and/or complex formation of integral membrane proteins into the membrane. Involved in integration of membrane proteins that insert both dependently and independently of the Sec translocase complex, as well as at least some lipoproteins. Aids folding of multispanning membrane proteins. This chain is Membrane protein insertase YidC, found in Borrelia recurrentis (strain A1).